The sequence spans 338 residues: Biotin synthase (338 aa).

The Radical SAM core domain maps to 50-277; the sequence is QAVQLSTLMS…KSYVRLSAGR (228 aa). 3 residues coordinate [4Fe-4S] cluster: cysteine 65, cysteine 69, and cysteine 72. [2Fe-2S] cluster contacts are provided by cysteine 109, cysteine 140, cysteine 200, and arginine 272.

Belongs to the radical SAM superfamily. Biotin synthase family. As to quaternary structure, homodimer. The cofactor is [4Fe-4S] cluster. [2Fe-2S] cluster is required as a cofactor.

It carries out the reaction (4R,5S)-dethiobiotin + (sulfur carrier)-SH + 2 reduced [2Fe-2S]-[ferredoxin] + 2 S-adenosyl-L-methionine = (sulfur carrier)-H + biotin + 2 5'-deoxyadenosine + 2 L-methionine + 2 oxidized [2Fe-2S]-[ferredoxin]. Its pathway is cofactor biosynthesis; biotin biosynthesis; biotin from 7,8-diaminononanoate: step 2/2. Catalyzes the conversion of dethiobiotin (DTB) to biotin by the insertion of a sulfur atom into dethiobiotin via a radical-based mechanism. The chain is Biotin synthase from Actinobacillus succinogenes (strain ATCC 55618 / DSM 22257 / CCUG 43843 / 130Z).